The primary structure comprises 347 residues: Fructose-1,6-bisphosphatase class 1 (347 aa).

Residues Glu107, Asp128, Leu130, and Asp131 each contribute to the Mg(2+) site. Substrate-binding positions include Asp131–Ser134, Asn224, Tyr257, and Lys286. Glu292 is a binding site for Mg(2+).

The protein belongs to the FBPase class 1 family. Homotetramer. Mg(2+) serves as cofactor.

The protein localises to the cytoplasm. It catalyses the reaction beta-D-fructose 1,6-bisphosphate + H2O = beta-D-fructose 6-phosphate + phosphate. It participates in carbohydrate biosynthesis; gluconeogenesis. In Sorangium cellulosum (strain So ce56) (Polyangium cellulosum (strain So ce56)), this protein is Fructose-1,6-bisphosphatase class 1.